The sequence spans 814 residues: Echinoderm microtubule-associated protein-like 1 (814 aa).

A coiled-coil region spans residues 31-72 (SMEVSDRIASLEQRVQMQEDDIQLLKSALADVVRRLNITEEQ). The tract at residues 77–180 (NRKGPTKARP…ESKPKEPAFS (104 aa)) is disordered. Polar residues predominate over residues 92-101 (PLRTTVNNGT). The segment covering 103–115 (LPKKPSASLPAPS) has biased composition (low complexity). Over residues 127–137 (KSINRTSSSER) the composition is skewed to polar residues. Positions 142–152 (GRRESSGDSKG) are enriched in basic and acidic residues. The span at 155 to 167 (NRTGSTSSSSSGK) shows a compositional bias: low complexity. The tandem atypical propeller in EMLs stretch occupies residues 175 to 814 (KEPAFSPEEG…DTSIMQWRVI (640 aa)). 12 WD repeats span residues 260 to 309 (EQLQ…IWDS), 314 to 357 (TLHV…VWDW), 362 to 399 (RLADVKCSNEAVFAADFHPTDTNIIVTCGKSHLYFWTL), 408 to 445 (QGLFEKQEKPKFVLCVTFSENGDTITGDSSGNILVWGK), 449 to 488 (RISYAVQGAHEGGIFALCMLRDGTLVSGGGKDRRLISWNG), 492 to 529 (KLHKAEIPEQFGPIRTVAEGKGNVILIGTTRNFVLQGT), 534 to 571 (FTPITQGHTDELWGLAIHASKPQFLTCGHDKHATLWDA), 577 to 612 (VWDKIIEDPAQSSGFHPSGSVVAVGTLTGRWFVFDT), 616 to 654 (DLVTVHTDGNEQLSVMRYSPDGNFLAIGSHDNCIYIYGV), 663 to 700 (RVGKCSGHSSFITHLDWSVNSQFLVSNSGDYEILYWVP), 708 to 767 (SVET…LFSY), and 774 to 813 (APSHIYSGHSSHVTNVDFLCEDSHLISTGGKDTSIMQWRV).

It belongs to the WD repeat EMAP family. In terms of assembly, homotrimer; self-association is mediated by the N-terminal coiled coil. Does not interact with EML3. Binds unpolymerized tubulins via its WD repeat region. Binds repolymerizing microtubules. Interacts with TASOR. Detected in adult brain cortex, hippocampus and thalamus. Expressed in the stomach, lungs and in Sertoli cells of the testis.

Its subcellular location is the cytoplasm. The protein resides in the perinuclear region. It localises to the cytoskeleton. Functionally, modulates the assembly and organization of the microtubule cytoskeleton, and probably plays a role in regulating the orientation of the mitotic spindle and the orientation of the plane of cell division. Required for normal proliferation of neuronal progenitor cells in the developing brain and for normal brain development. Does not affect neuron migration per se. The polypeptide is Echinoderm microtubule-associated protein-like 1 (Eml1) (Mus musculus (Mouse)).